A 369-amino-acid polypeptide reads, in one-letter code: DNA replication and repair protein RecF (369 aa).

30–37 provides a ligand contact to ATP; sequence GENGQGKT.

It belongs to the RecF family.

It is found in the cytoplasm. The RecF protein is involved in DNA metabolism; it is required for DNA replication and normal SOS inducibility. RecF binds preferentially to single-stranded, linear DNA. It also seems to bind ATP. This is DNA replication and repair protein RecF from Anaeromyxobacter sp. (strain Fw109-5).